Consider the following 33-residue polypeptide: Photosystem II reaction center protein Psb30 (33 aa).

Residues 5–25 (IVFQLTALLFVVAAGPLVIVL) form a helical membrane-spanning segment.

Belongs to the Psb30/Ycf12 family. PSII is composed of 1 copy each of membrane proteins PsbA, PsbB, PsbC, PsbD, PsbE, PsbF, PsbH, PsbI, PsbJ, PsbK, PsbL, PsbM, PsbT, PsbX, PsbY, PsbZ, Psb30/Ycf12, peripheral proteins of the oxygen-evolving complex and a large number of cofactors. It forms dimeric complexes.

The protein localises to the plastid. It localises to the chloroplast thylakoid membrane. In terms of biological role, a core subunit of photosystem II (PSII), probably helps stabilize the reaction center. This Chlorella vulgaris (Green alga) protein is Photosystem II reaction center protein Psb30.